Reading from the N-terminus, the 300-residue chain is Soluble inorganic pyrophosphatase 6, chloroplastic (300 aa).

A chloroplast-targeting transit peptide spans 1 to 66; that stretch reads MAATRVLTAA…CSAIYNPQVK (66 aa). Residue arginine 140 participates in diphosphate binding. The Proton donor role is filled by tyrosine 142. Mg(2+) is bound by residues aspartate 173, aspartate 178, and aspartate 210.

Belongs to the PPase family. Mg(2+) serves as cofactor. Expressed in all tissues tested. Highest expression in flowers, leaves and roots. Lower levels of expression in siliques, stems, ovary, stigma and pollen.

It is found in the plastid. The protein resides in the chloroplast stroma. It catalyses the reaction diphosphate + H2O = 2 phosphate + H(+). With respect to regulation, inhibited by NaF. The chain is Soluble inorganic pyrophosphatase 6, chloroplastic from Arabidopsis thaliana (Mouse-ear cress).